Consider the following 66-residue polypeptide: uncharacterized protein (66 aa).

Residues 1–18 (MSTTSSSSTFSTRTASLS) are compositionally biased toward low complexity. A disordered region spans residues 1–22 (MSTTSSSSTFSTRTASLSQSYT).

This is an uncharacterized protein from Schizosaccharomyces pombe (strain 972 / ATCC 24843) (Fission yeast).